The chain runs to 234 residues: Thiamine-phosphate synthase (234 aa).

4-amino-2-methyl-5-(diphosphooxymethyl)pyrimidine-binding positions include 65-69 and Asn-97; that span reads QYRNK. Mg(2+) is bound by residues Asp-98 and Asp-117. Ser-136 lines the 4-amino-2-methyl-5-(diphosphooxymethyl)pyrimidine pocket. 163-165 contacts 2-[(2R,5Z)-2-carboxy-4-methylthiazol-5(2H)-ylidene]ethyl phosphate; it reads SHT. Lys-166 serves as a coordination point for 4-amino-2-methyl-5-(diphosphooxymethyl)pyrimidine. 2-[(2R,5Z)-2-carboxy-4-methylthiazol-5(2H)-ylidene]ethyl phosphate contacts are provided by residues Gly-192 and 212-213; that span reads IS.

It belongs to the thiamine-phosphate synthase family. The cofactor is Mg(2+).

It catalyses the reaction 2-[(2R,5Z)-2-carboxy-4-methylthiazol-5(2H)-ylidene]ethyl phosphate + 4-amino-2-methyl-5-(diphosphooxymethyl)pyrimidine + 2 H(+) = thiamine phosphate + CO2 + diphosphate. The enzyme catalyses 2-(2-carboxy-4-methylthiazol-5-yl)ethyl phosphate + 4-amino-2-methyl-5-(diphosphooxymethyl)pyrimidine + 2 H(+) = thiamine phosphate + CO2 + diphosphate. It carries out the reaction 4-methyl-5-(2-phosphooxyethyl)-thiazole + 4-amino-2-methyl-5-(diphosphooxymethyl)pyrimidine + H(+) = thiamine phosphate + diphosphate. It participates in cofactor biosynthesis; thiamine diphosphate biosynthesis; thiamine phosphate from 4-amino-2-methyl-5-diphosphomethylpyrimidine and 4-methyl-5-(2-phosphoethyl)-thiazole: step 1/1. Its function is as follows. Condenses 4-methyl-5-(beta-hydroxyethyl)thiazole monophosphate (THZ-P) and 2-methyl-4-amino-5-hydroxymethyl pyrimidine pyrophosphate (HMP-PP) to form thiamine monophosphate (TMP). This is Thiamine-phosphate synthase from Xylella fastidiosa (strain Temecula1 / ATCC 700964).